Here is a 207-residue protein sequence, read N- to C-terminus: LexA repressor (207 aa).

Positions 28-48 (RAEISRELGFKSANAAEEHLK) form a DNA-binding region, H-T-H motif. Catalysis depends on for autocatalytic cleavage activity residues S123 and K160.

It belongs to the peptidase S24 family. In terms of assembly, homodimer.

The enzyme catalyses Hydrolysis of Ala-|-Gly bond in repressor LexA.. Its function is as follows. Represses a number of genes involved in the response to DNA damage (SOS response), including recA and lexA. In the presence of single-stranded DNA, RecA interacts with LexA causing an autocatalytic cleavage which disrupts the DNA-binding part of LexA, leading to derepression of the SOS regulon and eventually DNA repair. This Haemophilus influenzae (strain 86-028NP) protein is LexA repressor.